Consider the following 231-residue polypeptide: Protein fmp52-2, mitochondrial (231 aa).

Residues 1 to 46 (MTMTTAAVFGCTGAVGSQILATLLAIDTFPSVKTISRRLPNVQSPK) constitute a mitochondrion transit peptide.

It belongs to the FMP52 family.

It localises to the mitochondrion outer membrane. This chain is Protein fmp52-2, mitochondrial (fmp522), found in Neosartorya fischeri (strain ATCC 1020 / DSM 3700 / CBS 544.65 / FGSC A1164 / JCM 1740 / NRRL 181 / WB 181) (Aspergillus fischerianus).